The primary structure comprises 588 residues: Transcription factor 7-like 1 (588 aa).

Gly residues predominate over residues 1 to 31; it reads MPQLGGGGGGGGGGSGGGGGSSAGAAGGGDD. The interval 1 to 74 is CTNNB1-binding; it reads MPQLGGGGGG…VKSSLVNESE (74 aa). 3 disordered regions span residues 1–101, 203–234, and 409–506; these read MPQL…PRDY, SPGSPPTHLSPEIDPKTGIPRPPHPSELSPYY, and LYPT…LSLT. The segment covering 67–81 has biased composition (low complexity); the sequence is SSLVNESENQSSSSD. Basic and acidic residues predominate over residues 83–101; the sequence is EAERRPQPVRDTFQKPRDY. Residues 346-414 constitute a DNA-binding region (HMG box); the sequence is VKKPLNAFML…LHSQLYPTWS (69 aa). The Nuclear localization signal motif lies at 421–427; that stretch reads KKKKRKR. Low complexity-rich tracts occupy residues 431–441 and 478–497; these read LSQTQSQQQVQ and SPATPSAALASPAAPAATHS.

It belongs to the TCF/LEF family. As to quaternary structure, binds the armadillo repeat of CTNNB1 and forms a stable complex. Interacts with DAZAP2. As to expression, detected in hair follicles and skin keratinocytes, and at lower levels in stomach epithelium.

Its subcellular location is the nucleus. Its function is as follows. Participates in the Wnt signaling pathway. Binds to DNA and acts as a repressor in the absence of CTNNB1, and as an activator in its presence. Necessary for the terminal differentiation of epidermal cells, the formation of keratohyalin granules and the development of the barrier function of the epidermis. Down-regulates NQO1, leading to increased mitomycin c resistance. The sequence is that of Transcription factor 7-like 1 (TCF7L1) from Homo sapiens (Human).